The chain runs to 151 residues: Proteolipid protein 2 (151 aa).

Positions 19–137 (FSRTKKGILL…DAYITFPLKQ (119 aa)) constitute an MARVEL domain. A run of 4 helical transmembrane segments spans residues 25 to 45 (GILL…FSAS), 48 to 68 (AYSS…VFYM), 85 to 105 (FFRS…VLVE), and 112 to 132 (IVAG…AYIT).

The protein localises to the membrane. May play a role in cell differentiation in the intestinal epithelium. This Rattus norvegicus (Rat) protein is Proteolipid protein 2 (Plp2).